Reading from the N-terminus, the 210-residue chain is Quaternary-amine-specific corrinoid protein (210 aa).

The region spanning 1-90 (MADWKNLTQA…VLGSGDTAVA (90 aa)) is the B12-binding N-terminal domain. Residues 90-210 (AGTILIGTAH…GVKICQAWVG (121 aa)) form the B12-binding domain. Position 103 (His-103) interacts with methylcob(III)alamin.

Belongs to the methylamine corrinoid protein family. As to quaternary structure, the proline betaine:THF methyl transfer system is composed of two methyltransferases, MtpB and MtqA, and the corrinoid protein MtqC. The L-carnitine:THF methyl transfer system is composed of two methyltransferases, MtcB and MtqA, and the corrinoid protein MtqC.

In terms of biological role, involved in the degradation of the quaternary amines L-proline betaine and L-carnitine. Component of a corrinoid-dependent methyltransferase system that transfers a methyl group from L-proline betaine or L-carnitine to tetrahydrofolate (THF), forming methyl-THF, a key intermediate in the Wood-Ljungdahl acetogenesis pathway. Acts as a methyl group carrier between MtpB or MtcB, and MtqA. A methyl group from L-proline betaine or L-carnitine is first transferred to the corrinoid prosthetic group of MtqC by MtpB or MtcB, respectively, and then transferred from MtqC to THF by MtqA. This chain is Quaternary-amine-specific corrinoid protein, found in Eubacterium limosum.